Reading from the N-terminus, the 278-residue chain is Large ribosomal subunit protein uL2 (278 aa).

Disordered regions lie at residues 27–58 (STPE…GGGH) and 224–278 (VVMN…GKKR). Over residues 37–58 (LHGKGGRNAHGRITTRHKGGGH) the composition is skewed to basic residues. Over residues 253–268 (PEGRTRKPNKPSDKLI) the composition is skewed to basic and acidic residues. Basic residues predominate over residues 269–278 (VRRRRTGKKR).

The protein belongs to the universal ribosomal protein uL2 family. In terms of assembly, part of the 50S ribosomal subunit. Forms a bridge to the 30S subunit in the 70S ribosome.

In terms of biological role, one of the primary rRNA binding proteins. Required for association of the 30S and 50S subunits to form the 70S ribosome, for tRNA binding and peptide bond formation. It has been suggested to have peptidyltransferase activity; this is somewhat controversial. Makes several contacts with the 16S rRNA in the 70S ribosome. This chain is Large ribosomal subunit protein uL2, found in Mycobacterium sp. (strain KMS).